Here is a 222-residue protein sequence, read N- to C-terminus: Ribonuclease S-3 (222 aa).

The N-terminal stretch at 1–22 (MFRLQLISAFFILLFSLSPVSA) is a signal peptide. A disulfide bond links cysteine 38 and cysteine 44. An N-linked (GlcNAc...) asparagine glycan is attached at asparagine 50. Histidine 54 (proton donor) is an active-site residue. Residues histidine 54, 92 to 93 (QM), 109 to 110 (HE), and 113 to 114 (RH) contribute to the RNA site. 3 disulfides stabilise this stretch: cysteine 68-cysteine 117, cysteine 177-cysteine 210, and cysteine 193-cysteine 204. Residue glutamate 110 is part of the active site. The Proton acceptor role is filled by histidine 114.

This sequence belongs to the RNase T2 family.

The protein resides in the secreted. It localises to the extracellular space. It catalyses the reaction a ribonucleotidyl-ribonucleotide-RNA + H2O = a 3'-end 3'-phospho-ribonucleotide-RNA + a 5'-end dephospho-ribonucleoside-RNA + H(+). Self-incompatibility (SI) is the inherited ability of a flowering plant to prevent self-fertilization by discriminating between self and non-self pollen during pollination. In many species, self-incompatibility is controlled by the single, multiallelic locus S. The sequence is that of Ribonuclease S-3 (S3) from Petunia hybrida (Petunia).